A 375-amino-acid chain; its full sequence is tRNA-specific 2-thiouridylase MnmA (375 aa).

ATP-binding positions include 12-19 (GMSGGVDS) and M38. The interval 98 to 100 (NPD) is interaction with target base in tRNA. C103 functions as the Nucleophile in the catalytic mechanism. A disulfide bond links C103 and C200. G127 contributes to the ATP binding site. An interaction with tRNA region spans residues 150–152 (KDQ). Residue C200 is the Cysteine persulfide intermediate of the active site. The segment at 312-313 (RY) is interaction with tRNA.

The protein belongs to the MnmA/TRMU family.

Its subcellular location is the cytoplasm. It carries out the reaction S-sulfanyl-L-cysteinyl-[protein] + uridine(34) in tRNA + AH2 + ATP = 2-thiouridine(34) in tRNA + L-cysteinyl-[protein] + A + AMP + diphosphate + H(+). Functionally, catalyzes the 2-thiolation of uridine at the wobble position (U34) of tRNA, leading to the formation of s(2)U34. This Lactobacillus johnsonii (strain CNCM I-12250 / La1 / NCC 533) protein is tRNA-specific 2-thiouridylase MnmA.